Here is a 152-residue protein sequence, read N- to C-terminus: SUZ RNA-binding domain-containing (152 aa).

The tract at residues 28 to 152 is disordered; the sequence is KISQRENNNT…DGSQGFRQGR (125 aa). The SUZ domain occupies 42 to 107; the sequence is RAPVVIQDDS…ARKRILGSAS (66 aa). 2 stretches are compositionally biased toward basic and acidic residues: residues 89-100 and 113-130; these read AQREAEYAEARK and EKPV…EEIR. The region spanning 111-152 is the SUZ-C domain; sequence EQEKPVAERPARINQVEEIRQQNNVIRQPLGPDGSQGFRQGR.

Belongs to the SZRD1 family.

The sequence is that of SUZ RNA-binding domain-containing (szrd1) from Xenopus laevis (African clawed frog).